Consider the following 326-residue polypeptide: Probable cell division protein WhiA (326 aa).

A DNA-binding region (H-T-H motif) is located at residues 275 to 308 (SLDELGHYADPPMTKDAVAGRIRRLLAMADKRAS).

It belongs to the WhiA family.

Functionally, involved in cell division and chromosome segregation. The sequence is that of Probable cell division protein WhiA from Leifsonia xyli subsp. xyli (strain CTCB07).